The chain runs to 334 residues: Hydroxyproline O-arabinosyltransferase NOD3 (334 aa).

Residues 1–18 traverse the membrane as a helical; Signal-anchor segment; sequence LLMVLGFFFATYNLVSMI.

The protein belongs to the RDN family.

It localises to the golgi apparatus membrane. It carries out the reaction trans-4-hydroxy-L-prolyl-[protein] + UDP-beta-L-arabinofuranose = O-(beta-L-arabinofuranosyl)-trans-4-hydroxy-L-prolyl-[protein] + UDP + H(+). In terms of biological role, probable glycosyltransferase involved in the O-arabinosylation of several proteins including extensins and small signaling peptides. Catalyzes the transfer of the initial L-arabinose to the hydroxyl group of Hyp residues. Probably involved in the arabinosylation of CLAVATA3/ESR-related (CLE) signaling peptides that move from root to shoot, to interact with receptor kinase signaling that regulates nodulation. Involved in long distance nodulation signaling events. Involved in the autoregulation of nodulation (AON), a long distance systemic signaling from root to shoot and back again, which allows legumes to limit the number of root nodules formed based on available nitrogen and previous rhizobial colonization. In Pisum sativum (Garden pea), this protein is Hydroxyproline O-arabinosyltransferase NOD3.